The sequence spans 289 residues: Bifunctional aminodeoxychorismate lyase / D-amino acid transaminase (289 aa).

R50 serves as a coordination point for pyridoxal 5'-phosphate. K149 is subject to N6-(pyridoxal phosphate)lysine. Positions 153, 216, and 217 each coordinate pyridoxal 5'-phosphate. Position 252 (S252) interacts with 2-oxoglutarate. S253 lines the pyridoxal 5'-phosphate pocket. The 2-oxoglutarate site is built by M254 and T255.

The protein belongs to the class-IV pyridoxal-phosphate-dependent aminotransferase family. Homodimer. Requires pyridoxal 5'-phosphate as cofactor.

The catalysed reaction is 4-amino-4-deoxychorismate = 4-aminobenzoate + pyruvate + H(+). It carries out the reaction D-alanine + 2-oxoglutarate = D-glutamate + pyruvate. It participates in cofactor biosynthesis; tetrahydrofolate biosynthesis; 4-aminobenzoate from chorismate: step 2/2. The protein operates within cell wall biogenesis; peptidoglycan biosynthesis. Its function is as follows. Bifunctional enzyme that catalyzes two enzymatic reactions in biochemically unrelated pathways: acts as an aminodeoxychorismate (ADC) lyase (ADCL) in folate biosynthesis, converting 4-amino-4-deoxychorismate (ADC) to 4-aminobenzoate (PABA), and as a D-amino acid transaminase (DAAT) in peptidoglycan (PG) biosynthesis. DAAT activity is strictly restricted to D-alanine and D-glutamate. May function as a metabolic toggle that alternates between ADCL and DAAT activity, prioritizing the former over the latter in response to substrate accumulation. Bifunctionality of this enzyme provides a failsafe mechanism for a metabolic coupling between nucleic acid and cell wall biosynthesis that appears to ensure prioritization of PABA production over D-alanine/D-glutamate biosynthesis. The protein is Bifunctional aminodeoxychorismate lyase / D-amino acid transaminase of Mycobacterium tuberculosis (strain ATCC 25618 / H37Rv).